Consider the following 524-residue polypeptide: Glutamyl-tRNA(Gln) amidotransferase subunit A, mitochondrial (524 aa).

Active-site charge relay system residues include K76 and S171. S195 functions as the Acyl-ester intermediate in the catalytic mechanism.

The protein belongs to the amidase family. GatA subfamily. As to quaternary structure, subunit of the heterotrimeric GatCAB amidotransferase (AdT) complex, composed of A (qrsl1), B (gatb) and C (gatc) subunits.

It localises to the mitochondrion. The catalysed reaction is L-glutamyl-tRNA(Gln) + L-glutamine + ATP + H2O = L-glutaminyl-tRNA(Gln) + L-glutamate + ADP + phosphate + H(+). Allows the formation of correctly charged Gln-tRNA(Gln) through the transamidation of misacylated Glu-tRNA(Gln) in the mitochondria. The reaction takes place in the presence of glutamine and ATP through an activated gamma-phospho-Glu-tRNA(Gln). This chain is Glutamyl-tRNA(Gln) amidotransferase subunit A, mitochondrial (qrsl1), found in Xenopus laevis (African clawed frog).